A 247-amino-acid chain; its full sequence is Suppressor of silencing P0 (247 aa).

The region spanning 76-95 (LPRHLHYECLEWGLLCGTHP) is the F-box-like domain.

This sequence belongs to the polerovirus P0 protein family.

Suppressor of RNA-mediated gene silencing, also known as post-transcriptional gene silencing (PTGS), a mechanism of plant viral defense that limits the accumulation of viral RNAs. The P0 protein suppresses local PTGS using its F-box-like domain to mediate destabilization and degradation of the AGO1 protein, although not via an interaction with host SKP1A. Participates, together with the proteins P1 and P7, in the inhibition of the induction of aphid-induced host phytohormones. This could play a role in the attraction to the infected plants by aphids. This chain is Suppressor of silencing P0, found in Potato leafroll virus (strain Potato/Netherlands/Wageningen/1989) (PLrV).